The sequence spans 201 residues: MSRYRGPRFKKIRRLGVLPGLTSKRPRSRSDLQTQLRFGKRSQYRIRLEEKQKLRFHYGLTERQLLKYVHIAGKAKGSTGQVLLQLLEMRLDNILFRLGMASTIPGARQLVNHRHILVNGRIVDIPSYRCKPLDIITTKDKERSKALIQNYLVSSPRGELPNHLTIDSLQYKGFVNQIIDSKWIGLKINELLVVEYYSRQT.

Residues 89-150 enclose the S4 RNA-binding domain; it reads MRLDNILFRL…KERSKALIQN (62 aa).

Belongs to the universal ribosomal protein uS4 family. In terms of assembly, part of the 30S ribosomal subunit. Contacts protein S5. The interaction surface between S4 and S5 is involved in control of translational fidelity.

Its subcellular location is the plastid. It localises to the chloroplast. Its function is as follows. One of the primary rRNA binding proteins, it binds directly to 16S rRNA where it nucleates assembly of the body of the 30S subunit. With S5 and S12 plays an important role in translational accuracy. In Phalaenopsis aphrodite subsp. formosana (Moth orchid), this protein is Small ribosomal subunit protein uS4c (rps4).